Here is a 247-residue protein sequence, read N- to C-terminus: MHTPVLFEHPLNEKMRTWLRIEFLIQQMAFHPQIASHADALHFFRNAGDLLDVLERGEVRTDLVKELERQQRKLQSWAEVPGVDQERINELRHQLKQSSSTLMAAPRIGQFLREDRLIALVRQRLSIPGGCCSFDLPTLHIWLHMPQAHRDEQVASWLASLDPLVQSLSLILDLIRNSALFRKQTSLNGFYQDNGEDADLLRLRLDLAHQLYPQISGHKSRFAIRFLALDSEYGIVPERFDFELACC.

It belongs to the ZapD family. In terms of assembly, interacts with FtsZ.

Its subcellular location is the cytoplasm. Functionally, cell division factor that enhances FtsZ-ring assembly. Directly interacts with FtsZ and promotes bundling of FtsZ protofilaments, with a reduction in FtsZ GTPase activity. The protein is Cell division protein ZapD of Klebsiella pneumoniae subsp. pneumoniae (strain ATCC 700721 / MGH 78578).